We begin with the raw amino-acid sequence, 42 residues long: Large ribosomal subunit protein bL36 (42 aa).

Belongs to the bacterial ribosomal protein bL36 family.

The protein is Large ribosomal subunit protein bL36 of Wolbachia sp. subsp. Brugia malayi (strain TRS).